Here is a 558-residue protein sequence, read N- to C-terminus: Biotin biosynthesis bifunctional protein BioHC (558 aa).

The carboxylesterase stretch occupies residues 1–287 (MSNIEPSNVK…FSQPAKIAQI (287 aa)). Residues Trp56, 115 to 116 (SL), and 182 to 186 (FGLLQ) each bind substrate. The active-site Nucleophile is the Ser115. Catalysis depends on residues Asp246 and His274. Residue His274 coordinates substrate. Residues 288–558 (MLARVHAKRN…EVGFYQLLKV (271 aa)) are malonyl-ACP O-methyltransferase.

The protein in the N-terminal section; belongs to the AB hydrolase superfamily. Carboxylesterase BioH family. This sequence in the C-terminal section; belongs to the methyltransferase superfamily.

The enzyme catalyses a carboxylic ester + H2O = an alcohol + a carboxylate + H(+). The catalysed reaction is malonyl-[ACP] + S-adenosyl-L-methionine = malonyl-[ACP] methyl ester + S-adenosyl-L-homocysteine. The protein operates within cofactor biosynthesis; biotin biosynthesis. Converts the free carboxyl group of a malonyl-thioester to its methyl ester by transfer of a methyl group from S-adenosyl-L-methionine (SAM). It allows to synthesize pimeloyl-ACP via the fatty acid synthetic pathway. Its function is as follows. The physiological role of BioH is to remove the methyl group introduced by BioC when the pimeloyl moiety is complete. It allows to synthesize pimeloyl-ACP via the fatty acid synthetic pathway through the hydrolysis of the ester bonds of pimeloyl-ACP esters. This is Biotin biosynthesis bifunctional protein BioHC (bioC) from Saccharophagus degradans (strain 2-40 / ATCC 43961 / DSM 17024).